A 100-amino-acid chain; its full sequence is Urease subunit gamma (100 aa).

This sequence belongs to the urease gamma subunit family. As to quaternary structure, heterotrimer of UreA (gamma), UreB (beta) and UreC (alpha) subunits. Three heterotrimers associate to form the active enzyme.

The protein localises to the cytoplasm. It carries out the reaction urea + 2 H2O + H(+) = hydrogencarbonate + 2 NH4(+). The protein operates within nitrogen metabolism; urea degradation; CO(2) and NH(3) from urea (urease route): step 1/1. The chain is Urease subunit gamma from Chromohalobacter salexigens (strain ATCC BAA-138 / DSM 3043 / CIP 106854 / NCIMB 13768 / 1H11).